Consider the following 170-residue polypeptide: Acireductone dioxygenase (170 aa).

Residues His-99, His-101, Glu-105, and His-144 each coordinate Fe(2+). Ni(2+)-binding residues include His-99, His-101, Glu-105, and His-144.

This sequence belongs to the acireductone dioxygenase (ARD) family. Monomer. Requires Fe(2+) as cofactor. Ni(2+) is required as a cofactor.

It catalyses the reaction 1,2-dihydroxy-5-(methylsulfanyl)pent-1-en-3-one + O2 = 3-(methylsulfanyl)propanoate + CO + formate + 2 H(+). It carries out the reaction 1,2-dihydroxy-5-(methylsulfanyl)pent-1-en-3-one + O2 = 4-methylsulfanyl-2-oxobutanoate + formate + 2 H(+). It functions in the pathway amino-acid biosynthesis; L-methionine biosynthesis via salvage pathway; L-methionine from S-methyl-5-thio-alpha-D-ribose 1-phosphate: step 5/6. Its function is as follows. Catalyzes 2 different reactions between oxygen and the acireductone 1,2-dihydroxy-3-keto-5-methylthiopentene (DHK-MTPene) depending upon the metal bound in the active site. Fe-containing acireductone dioxygenase (Fe-ARD) produces formate and 2-keto-4-methylthiobutyrate (KMTB), the alpha-ketoacid precursor of methionine in the methionine recycle pathway. Ni-containing acireductone dioxygenase (Ni-ARD) produces methylthiopropionate, carbon monoxide and formate, and does not lie on the methionine recycle pathway. The chain is Acireductone dioxygenase from Bacillus mycoides (strain KBAB4) (Bacillus weihenstephanensis).